The following is a 437-amino-acid chain: ATP-dependent RNA helicase SUB2 (437 aa).

Over residues 1 to 19 (MSHEAEEDLLEYSDNEQEV) the composition is skewed to acidic residues. The tract at residues 1–45 (MSHEAEEDLLEYSDNEQEVQVDNKATEVNAEGNGESQAKDSDKKG) is disordered. The short motif at 53 to 81 (TGFKDFLLKPELSRAIIDCGFEHPSEVQQ) is the Q motif element. Residues 84–259 (IPQSIHGTDV…RRFLQNPLEI (176 aa)) enclose the Helicase ATP-binding domain. 97–104 (AKSGLGKT) provides a ligand contact to ATP. The short motif at 206-209 (DECD) is the DECD box element. Residues 287 to 432 (KLAQLLDDLE…EFPEEGVDPS (146 aa)) form the Helicase C-terminal domain.

This sequence belongs to the DEAD box helicase family. DECD subfamily.

It localises to the nucleus. The enzyme catalyses ATP + H2O = ADP + phosphate + H(+). Its function is as follows. ATP-binding RNA helicase involved in transcription elongation and required for the export of mRNA out of the nucleus. SUB2 also plays a role in pre-mRNA splicing and spliceosome assembly. May be involved in rDNA and telomeric silencing, and maintenance of genome integrity. The polypeptide is ATP-dependent RNA helicase SUB2 (SUB2) (Kluyveromyces lactis (strain ATCC 8585 / CBS 2359 / DSM 70799 / NBRC 1267 / NRRL Y-1140 / WM37) (Yeast)).